The chain runs to 156 residues: Arginine repressor (156 aa).

It belongs to the ArgR family.

The protein resides in the cytoplasm. Its pathway is amino-acid biosynthesis; L-arginine biosynthesis [regulation]. Regulates arginine biosynthesis genes. The polypeptide is Arginine repressor (Photobacterium profundum (strain SS9)).